We begin with the raw amino-acid sequence, 272 residues long: Tryptophan synthase alpha chain (272 aa).

Active-site proton acceptor residues include E60 and D71.

Belongs to the TrpA family. As to quaternary structure, tetramer of two alpha and two beta chains.

The enzyme catalyses (1S,2R)-1-C-(indol-3-yl)glycerol 3-phosphate + L-serine = D-glyceraldehyde 3-phosphate + L-tryptophan + H2O. It participates in amino-acid biosynthesis; L-tryptophan biosynthesis; L-tryptophan from chorismate: step 5/5. Its function is as follows. The alpha subunit is responsible for the aldol cleavage of indoleglycerol phosphate to indole and glyceraldehyde 3-phosphate. The polypeptide is Tryptophan synthase alpha chain (Methanosarcina acetivorans (strain ATCC 35395 / DSM 2834 / JCM 12185 / C2A)).